The sequence spans 240 residues: Short palate, lung and nasal epithelium carcinoma-associated protein 2B (240 aa).

An N-terminal signal peptide occupies residues 1–19; the sequence is MVQLWKLVLLCGLLAGTSA. A disulfide bridge links cysteine 163 with cysteine 206.

It belongs to the BPI/LBP/Plunc superfamily. Plunc family. As to expression, parotid glands.

The protein resides in the secreted. The polypeptide is Short palate, lung and nasal epithelium carcinoma-associated protein 2B (SPLUNC2B) (Bos taurus (Bovine)).